Here is a 374-residue protein sequence, read N- to C-terminus: GDSL esterase/lipase At3g50400 (374 aa).

An N-terminal signal peptide occupies residues 1–26 (MKKSIFFVPVLVLFFFGSRFSRVASA). Serine 41 (nucleophile) is an active-site residue. Residues asparagine 104 and asparagine 125 are each glycosylated (N-linked (GlcNAc...) asparagine). Residues aspartate 339 and histidine 342 contribute to the active site.

This sequence belongs to the 'GDSL' lipolytic enzyme family.

Its subcellular location is the secreted. The sequence is that of GDSL esterase/lipase At3g50400 from Arabidopsis thaliana (Mouse-ear cress).